The primary structure comprises 238 residues: Ribonuclease PH (238 aa).

Phosphate is bound by residues Arg86 and 124–126; that span reads GTR.

This sequence belongs to the RNase PH family. In terms of assembly, homohexameric ring arranged as a trimer of dimers.

It catalyses the reaction tRNA(n+1) + phosphate = tRNA(n) + a ribonucleoside 5'-diphosphate. In terms of biological role, phosphorolytic 3'-5' exoribonuclease that plays an important role in tRNA 3'-end maturation. Removes nucleotide residues following the 3'-CCA terminus of tRNAs; can also add nucleotides to the ends of RNA molecules by using nucleoside diphosphates as substrates, but this may not be physiologically important. Probably plays a role in initiation of 16S rRNA degradation (leading to ribosome degradation) during starvation. This Vibrio parahaemolyticus serotype O3:K6 (strain RIMD 2210633) protein is Ribonuclease PH.